A 369-amino-acid polypeptide reads, in one-letter code: Histone deacetylase-like amidohydrolase (369 aa).

Residue His-143 is the Proton donor/acceptor of the active site. 3 residues coordinate Zn(2+): Asp-180, His-182, and Asp-268.

It belongs to the histone deacetylase family. As to quaternary structure, homotetramer; dimer of dimers. Requires Zn(2+) as cofactor.

With respect to regulation, zinc, and cobalt and nickel at a lesser extent, are able to increase the catalytic activity (2.2-, 1.3- and 1.1-fold respectively) at concentrations of 1 mM. Higher concentrations have an inhibitory effect. Magnesium, manganese and calcium have no effect on activity at concentrations between 0 and 10 mM. At 100 mM, the catalytic activity is increased between 1.2- and 2.1-fold. Hydroxamates like TSA and SAHA inhibit the enzyme. Is also inhibited by azobenzenes, stilbenes and arylazopyrazoles. Functionally, exhibits significant levels of protein deacetylase activity comparable to those of eukaryotic HDACs in assays both with fluorogenic peptidic substrates and acetate-radiolabeled histones. Accepts proteins with epsilon-acetylated lysine residues and tritiated-acetate-prelabeled chicken histones as substrates. The natural substrate protein is not yet known. This chain is Histone deacetylase-like amidohydrolase (hdaH), found in Alcaligenes sp. (strain DSM 11172) (Bordetella sp. (strain FB188)).